The primary structure comprises 340 residues: Phenylalanine--tRNA ligase alpha subunit (340 aa).

E255 is a binding site for Mg(2+).

This sequence belongs to the class-II aminoacyl-tRNA synthetase family. Phe-tRNA synthetase alpha subunit type 1 subfamily. As to quaternary structure, tetramer of two alpha and two beta subunits. Requires Mg(2+) as cofactor.

It localises to the cytoplasm. The enzyme catalyses tRNA(Phe) + L-phenylalanine + ATP = L-phenylalanyl-tRNA(Phe) + AMP + diphosphate + H(+). This Exiguobacterium sibiricum (strain DSM 17290 / CCUG 55495 / CIP 109462 / JCM 13490 / 255-15) protein is Phenylalanine--tRNA ligase alpha subunit.